The chain runs to 380 residues: Erythronate-4-phosphate dehydrogenase (380 aa).

Substrate is bound by residues Ser45 and Thr66. Cys65 and Cys90 are oxidised to a cystine. Residues 126 to 127 (QV), Asp146, Thr175, 206 to 208 (ASR), and Asp232 contribute to the NAD(+) site. The active site involves Arg208. Residue Glu237 is part of the active site. The active-site Proton donor is His254. Gly257 serves as a coordination point for NAD(+). Tyr258 lines the substrate pocket.

It belongs to the D-isomer specific 2-hydroxyacid dehydrogenase family. PdxB subfamily. Homodimer.

It is found in the cytoplasm. It catalyses the reaction 4-phospho-D-erythronate + NAD(+) = (R)-3-hydroxy-2-oxo-4-phosphooxybutanoate + NADH + H(+). It functions in the pathway cofactor biosynthesis; pyridoxine 5'-phosphate biosynthesis; pyridoxine 5'-phosphate from D-erythrose 4-phosphate: step 2/5. Catalyzes the oxidation of erythronate-4-phosphate to 3-hydroxy-2-oxo-4-phosphonooxybutanoate. The sequence is that of Erythronate-4-phosphate dehydrogenase from Pseudomonas aeruginosa (strain ATCC 15692 / DSM 22644 / CIP 104116 / JCM 14847 / LMG 12228 / 1C / PRS 101 / PAO1).